Here is a 189-residue protein sequence, read N- to C-terminus: Potassium-transporting ATPase KdpC subunit (189 aa).

Residues 6–26 (PAILFFIVFTILCGGVYPAVV) traverse the membrane as a helical segment.

This sequence belongs to the KdpC family. In terms of assembly, the system is composed of three essential subunits: KdpA, KdpB and KdpC.

It is found in the cell inner membrane. Its function is as follows. Part of the high-affinity ATP-driven potassium transport (or Kdp) system, which catalyzes the hydrolysis of ATP coupled with the electrogenic transport of potassium into the cytoplasm. This subunit acts as a catalytic chaperone that increases the ATP-binding affinity of the ATP-hydrolyzing subunit KdpB by the formation of a transient KdpB/KdpC/ATP ternary complex. The sequence is that of Potassium-transporting ATPase KdpC subunit from Geotalea uraniireducens (strain Rf4) (Geobacter uraniireducens).